A 375-amino-acid chain; its full sequence is Odorant receptor 49b (375 aa).

At M1 to R28 the chain is on the cytoplasmic side. Residues Y29–T49 traverse the membrane as a helical segment. Topologically, residues N50–S60 are extracellular. A helical membrane pass occupies residues Y61–L77. Residues A78 to R121 are Cytoplasmic-facing. Residues G122–S142 form a helical membrane-spanning segment. Residues E143–M176 are Extracellular-facing. Residues G177–V197 traverse the membrane as a helical segment. The Cytoplasmic portion of the chain corresponds to R198 to M251. Residues F252–I272 traverse the membrane as a helical segment. At V273–Q278 the chain is on the extracellular side. The helical transmembrane segment at L279–Y299 threads the bilayer. Residues A300–A342 are Cytoplasmic-facing. The helical transmembrane segment at I343–T363 threads the bilayer. Residues Y364 to G375 lie on the Extracellular side of the membrane.

Belongs to the insect chemoreceptor superfamily. Heteromeric odorant receptor channel (TC 1.A.69) family. Or30a subfamily. In terms of assembly, interacts with Orco. Complexes exist early in the endomembrane system in olfactory sensory neurons (OSNs), coupling these complexes to the conserved ciliary trafficking pathway. In terms of tissue distribution, expressed in olfactory sensory neurons in the antenna.

The protein resides in the cell membrane. Functionally, odorant receptor which mediates acceptance or avoidance behavior, depending on its substrates. The odorant receptor repertoire encodes a large collection of odor stimuli that vary widely in identity, intensity, and duration. May form a complex with Orco to form odorant-sensing units, providing sensitive and prolonged odorant signaling and calcium permeability. This is Odorant receptor 49b (Or49b) from Drosophila melanogaster (Fruit fly).